The following is a 345-amino-acid chain: RDS/peripherin-like protein xRDS35 (345 aa).

Over 1–24 the chain is Cytoplasmic; the sequence is MVLFKAKFSFQRRVKLAQTLWLLS. The chain crosses the membrane as a helical span at residues 25–43; that stretch reads WLSVLVGCLTFGMGIFLKV. The Lumenal portion of the chain corresponds to 44–61; sequence QLWIHNEVMENTSAHAVP. N-linked (GlcNAc...) asparagine glycosylation occurs at Asn54. A helical transmembrane segment spans residues 62–80; it reads NTVITAGLVGILLGIYAGK. At 81–99 the chain is on the cytoplasmic side; it reads VSQASMDVTKYQRWKSFMM. A helical membrane pass occupies residues 100 to 123; sequence PFFFLAILSCLVCLAALVLSVALR. Over 124–264 the chain is Lumenal; sequence GTLEESLKIG…LSYYTGIMAT (141 aa). Asn229 is a glycosylation site (N-linked (GlcNAc...) asparagine). Residues 265–290 form a helical membrane-spanning segment; sequence NGAAVTLSFLLQASVLVSLRYLHTSM. Residues 291 to 345 lie on the Cytoplasmic side of the membrane; it reads DKISGPDDMEADTEGFILEKGVTETMNTTLEKMKGLFMSNQVETAEGGGEAAAAS.

Belongs to the PRPH2/ROM1 family. Homodimer; disulfide-linked. Rod specific.

It is found in the membrane. This chain is RDS/peripherin-like protein xRDS35 (rds35), found in Xenopus laevis (African clawed frog).